The chain runs to 208 residues: NAD(P)H-quinone oxidoreductase subunit I (208 aa).

4Fe-4S ferredoxin-type domains lie at 55–84 and 95–124; these read GRIH…VDWV and RNYS…MTEE. [4Fe-4S] cluster contacts are provided by Cys64, Cys67, Cys70, Cys74, Cys104, Cys107, Cys110, and Cys114.

This sequence belongs to the complex I 23 kDa subunit family. As to quaternary structure, NDH-1 is composed of at least 11 different subunits. Requires [4Fe-4S] cluster as cofactor.

The protein resides in the cellular thylakoid membrane. The enzyme catalyses a plastoquinone + NADH + (n+1) H(+)(in) = a plastoquinol + NAD(+) + n H(+)(out). It carries out the reaction a plastoquinone + NADPH + (n+1) H(+)(in) = a plastoquinol + NADP(+) + n H(+)(out). Functionally, NDH-1 shuttles electrons from an unknown electron donor, via FMN and iron-sulfur (Fe-S) centers, to quinones in the respiratory and/or the photosynthetic chain. The immediate electron acceptor for the enzyme in this species is believed to be plastoquinone. Couples the redox reaction to proton translocation, and thus conserves the redox energy in a proton gradient. This is NAD(P)H-quinone oxidoreductase subunit I from Prochlorococcus marinus (strain MIT 9215).